We begin with the raw amino-acid sequence, 143 residues long: Probable cyclic pyranopterin monophosphate synthase (143 aa).

Substrate-binding positions include 61–63 (MCH) and 97–98 (ME). Asp112 is an active-site residue.

This sequence belongs to the MoaC family. Homohexamer; trimer of dimers.

The enzyme catalyses (8S)-3',8-cyclo-7,8-dihydroguanosine 5'-triphosphate = cyclic pyranopterin phosphate + diphosphate. Its pathway is cofactor biosynthesis; molybdopterin biosynthesis. In terms of biological role, catalyzes the conversion of (8S)-3',8-cyclo-7,8-dihydroguanosine 5'-triphosphate to cyclic pyranopterin monophosphate (cPMP). This Sulfolobus acidocaldarius (strain ATCC 33909 / DSM 639 / JCM 8929 / NBRC 15157 / NCIMB 11770) protein is Probable cyclic pyranopterin monophosphate synthase.